A 263-amino-acid chain; its full sequence is Ribosomal RNA small subunit methyltransferase J (263 aa).

S-adenosyl-L-methionine contacts are provided by residues Arg108 to Asp109, Glu124 to Arg125, and Asp178.

This sequence belongs to the methyltransferase superfamily. RsmJ family.

The protein resides in the cytoplasm. The enzyme catalyses guanosine(1516) in 16S rRNA + S-adenosyl-L-methionine = N(2)-methylguanosine(1516) in 16S rRNA + S-adenosyl-L-homocysteine + H(+). Its function is as follows. Specifically methylates the guanosine in position 1516 of 16S rRNA. This is Ribosomal RNA small subunit methyltransferase J from Idiomarina loihiensis (strain ATCC BAA-735 / DSM 15497 / L2-TR).